The primary structure comprises 207 residues: Small ribosomal subunit protein uS4 (207 aa).

Residues 31 to 52 (KAKFDSKPGQHGRTSGARTSDY) are disordered. The 61-residue stretch at 97-157 (CRLDNVVYRM…DKSKKQARIV (61 aa)) folds into the S4 RNA-binding domain.

Belongs to the universal ribosomal protein uS4 family. Part of the 30S ribosomal subunit. Contacts protein S5. The interaction surface between S4 and S5 is involved in control of translational fidelity.

Its function is as follows. One of the primary rRNA binding proteins, it binds directly to 16S rRNA where it nucleates assembly of the body of the 30S subunit. Functionally, with S5 and S12 plays an important role in translational accuracy. This is Small ribosomal subunit protein uS4 from Acidovorax sp. (strain JS42).